The primary structure comprises 475 residues: NADP-dependent glyceraldehyde-3-phosphate dehydrogenase (475 aa).

Arg-103 contacts substrate. An NADP(+)-binding site is contributed by Ser-151. 154-155 (NY) is a binding site for substrate. NADP(+)-binding positions include Lys-177, Thr-180, Asp-215, and 230-251 (GSTG…MLEL). Residues Glu-250 and Cys-284 contribute to the active site. Substrate is bound at residue 283-285 (RCT). Glu-377 contributes to the NADP(+) binding site. Arg-437 serves as a coordination point for substrate.

Belongs to the aldehyde dehydrogenase family. In terms of assembly, homotetramer.

The catalysed reaction is D-glyceraldehyde 3-phosphate + NADP(+) + H2O = (2R)-3-phosphoglycerate + NADPH + 2 H(+). In Streptococcus mutans serotype c (strain ATCC 700610 / UA159), this protein is NADP-dependent glyceraldehyde-3-phosphate dehydrogenase (gapN).